A 102-amino-acid chain; its full sequence is MRLILNEQEIVDGICVYISNEEDIYPEDVEVKELSYNKRTGFFAEATFGLHHKQLMSDDISEGIIQFLEEYHNFNPDVTVVELQFDKKKGFSALVFVNEAEE.

This is an uncharacterized protein from Bacillus subtilis (strain 168).